The chain runs to 312 residues: Pantothenate kinase (312 aa).

97–104 (GSVAVGKS) serves as a coordination point for ATP.

The protein belongs to the prokaryotic pantothenate kinase family.

The protein localises to the cytoplasm. The enzyme catalyses (R)-pantothenate + ATP = (R)-4'-phosphopantothenate + ADP + H(+). It functions in the pathway cofactor biosynthesis; coenzyme A biosynthesis; CoA from (R)-pantothenate: step 1/5. This is Pantothenate kinase from Mycolicibacterium vanbaalenii (strain DSM 7251 / JCM 13017 / BCRC 16820 / KCTC 9966 / NRRL B-24157 / PYR-1) (Mycobacterium vanbaalenii).